The following is an 82-amino-acid chain: Small ribosomal subunit protein bS16 (82 aa).

Belongs to the bacterial ribosomal protein bS16 family.

The polypeptide is Small ribosomal subunit protein bS16 (Vibrio atlanticus (strain LGP32) (Vibrio splendidus (strain Mel32))).